A 187-amino-acid polypeptide reads, in one-letter code: MERCGWVSQDPLYIAYHDNEWGVPETDSKKLFEMICLEGQQAGLSWITVLKKRENYRACFHQFDPVKVAAMQEEDVERLVQDAGIIRHRGKIQAIIGNARAYLQMEQNGEPFVDFVWSFVNHQPQVTQATTLSEIPTSTSASDALSKALKKRGFKFVGTTICYSFMQACGLVNDHVVGCCCYPGNKP.

Residues Cys4, His17, His175, and Cys179 each contribute to the Zn(2+) site.

It carries out the reaction Hydrolysis of alkylated DNA, releasing 3-methyladenine.. Activity is controlled by product inhibition. Hydrolysis of the deoxyribose N-glycosidic bond to excise 3-methyladenine from the damaged DNA polymer formed by alkylation lesions. The sequence is that of DNA-3-methyladenine glycosylase 1 from Escherichia coli (strain K12).